Reading from the N-terminus, the 359-residue chain is Homoserine dehydrogenase (359 aa).

NAD(+) contacts are provided by Ala-13, Val-15, Val-16, and Ala-41. Val-16 contributes to the NADP(+) binding site. Residue Val-16 participates in NADPH binding. The NADPH site is built by Lys-60, Thr-93, Ser-94, and Lys-117. Thr-93 serves as a coordination point for NAD(+). An NADP(+)-binding site is contributed by Thr-93. Lys-117 contacts NADP(+). Residues Glu-143, Val-146, Ala-148, and Leu-150 each coordinate Na(+). Positions 205 and 208 each coordinate NADP(+). Residues Glu-208 and Asp-219 each coordinate L-homoserine. The Proton donor role is filled by Lys-223. Lys-290 is covalently cross-linked (Glycyl lysine isopeptide (Lys-Gly) (interchain with G-Cter in ubiquitin)). Residue Gly-340 coordinates NAD(+). NADP(+) is bound at residue Gly-340. Gly-340 contacts NADPH.

This sequence belongs to the homoserine dehydrogenase family. Homodimer. A metal cation serves as cofactor.

It carries out the reaction L-homoserine + NADP(+) = L-aspartate 4-semialdehyde + NADPH + H(+). It catalyses the reaction L-homoserine + NAD(+) = L-aspartate 4-semialdehyde + NADH + H(+). The protein operates within amino-acid biosynthesis; L-methionine biosynthesis via de novo pathway; L-homoserine from L-aspartate: step 3/3. Its pathway is amino-acid biosynthesis; L-threonine biosynthesis; L-threonine from L-aspartate: step 3/5. Catalyzes the conversion of L-aspartate-beta-semialdehyde (L-Asa) to L-homoserine (L-Hse), the third step in the biosynthesis of amino acids that derive from aspartate (the aspartate family of amino acids), including methioinine and threonine, the latter of which is a precursor to isoleucine; production of homoserine leads to a branch-point in the pathway as it can either be O-phosphorylated for processing to threonine, or O-acylated for processing to methionine. The protein is Homoserine dehydrogenase (HOM6) of Saccharomyces cerevisiae (strain ATCC 204508 / S288c) (Baker's yeast).